The following is a 139-amino-acid chain: Protein archease (139 aa).

Positions 12, 138, and 139 each coordinate Ca(2+).

It belongs to the archease family.

In terms of biological role, activates the tRNA-splicing ligase complex by facilitating the enzymatic turnover of catalytic subunit RtcB. Acts by promoting the guanylylation of RtcB, a key intermediate step in tRNA ligation. Can also alter the NTP specificity of RtcB such that ATP, dGTP or ITP is used efficiently. The polypeptide is Protein archease (Saccharolobus islandicus (strain L.S.2.15 / Lassen #1) (Sulfolobus islandicus)).